A 156-amino-acid polypeptide reads, in one-letter code: Small ribosomal subunit protein uS7 (156 aa).

This sequence belongs to the universal ribosomal protein uS7 family. As to quaternary structure, part of the 30S ribosomal subunit. Contacts proteins S9 and S11.

One of the primary rRNA binding proteins, it binds directly to 16S rRNA where it nucleates assembly of the head domain of the 30S subunit. Is located at the subunit interface close to the decoding center, probably blocks exit of the E-site tRNA. This Nitrosomonas europaea (strain ATCC 19718 / CIP 103999 / KCTC 2705 / NBRC 14298) protein is Small ribosomal subunit protein uS7.